A 341-amino-acid polypeptide reads, in one-letter code: L-threonine 3-dehydrogenase (341 aa).

C38 contacts Zn(2+). Active-site charge relay system residues include T40 and H43. Zn(2+) is bound by residues H63, E64, C93, C96, C99, and C107. NAD(+)-binding positions include I175, D195, R200, L262–I264, and I286–Y287.

This sequence belongs to the zinc-containing alcohol dehydrogenase family. In terms of assembly, homotetramer. Zn(2+) is required as a cofactor.

The protein resides in the cytoplasm. It catalyses the reaction L-threonine + NAD(+) = (2S)-2-amino-3-oxobutanoate + NADH + H(+). It participates in amino-acid degradation; L-threonine degradation via oxydo-reductase pathway; glycine from L-threonine: step 1/2. In terms of biological role, catalyzes the NAD(+)-dependent oxidation of L-threonine to 2-amino-3-ketobutyrate. The protein is L-threonine 3-dehydrogenase of Shewanella frigidimarina (strain NCIMB 400).